Reading from the N-terminus, the 299-residue chain is Elongation factor Ts (299 aa).

The segment at 81 to 84 (TDFV) is involved in Mg(2+) ion dislocation from EF-Tu.

Belongs to the EF-Ts family.

The protein localises to the cytoplasm. Its function is as follows. Associates with the EF-Tu.GDP complex and induces the exchange of GDP to GTP. It remains bound to the aminoacyl-tRNA.EF-Tu.GTP complex up to the GTP hydrolysis stage on the ribosome. The sequence is that of Elongation factor Ts from Halothermothrix orenii (strain H 168 / OCM 544 / DSM 9562).